A 1064-amino-acid chain; its full sequence is Protein NLRC3 (1064 aa).

In terms of domain architecture, NACHT spans 138 to 459; sequence RVSLTIGVAG…YCFIHLSLQE (322 aa). 144-151 is a binding site for ATP; that stretch reads GVAGVGKT. LRR repeat units lie at residues 338 to 362, 570 to 593, 632 to 662, 664 to 687, 692 to 715, 720 to 743, 748 to 771, 776 to 799, 804 to 827, 832 to 855, 860 to 883, 888 to 911, 916 to 939, 972 to 995, 1000 to 1022, and 1028 to 1051; these read LGHL…LCEL, LSEL…TLAG, LPQL…VLSG, DCRI…ALAR, NRSL…ALAD, NRTL…CVAE, NQTI…QMAD, NRSL…ALAE, NQIL…VLMR, NQTL…ALTQ, NNTL…AIAV, NHSL…ALGQ, NRTL…SVAG, NRTL…ALAN, NSSL…IFVA, and NHGL…MISE.

The protein belongs to the NLRP family. Directly interacts (via CARD) with TMEM173/STING; this interaction reduces TMEM173 trafficking to the perinuclear region in response to interferon stimulatory DNA. Also interacts, but to a lesser extent, with TBK1. Interacts with TRAF6; this interaction results in decreased TRAF6 'Lys-63'-linked polyubiquitination, but leaves 'Lys-48'-linked chains unchanged, promoting TRAF6 protein degradation. Interacts with PIK3R1/PIK3R2; this interaction disrupts the association between PIK3R1/PIK3R2 and the p110 catalytic subunit PIK3CA/PIK3CB/PIK3CD and reduces PIK3R1/PIK3R2 activation. Weakly interacts with PYCARD/ASC. Interacts with CASP1 and CASP5. Expressed in bone marrow-derived macrophages.

The protein resides in the cytoplasm. Its function is as follows. Negative regulator of the innate immune response. Attenuates signaling pathways activated by Toll-like receptors (TLRs) and the DNA sensor STING/TMEM173 in response to pathogen-associated molecular patterns, such as intracellular poly(dA:dT), but not poly(I:C), or in response to DNA virus infection, including that of Herpes simplex virus 1 (HSV1). May affect TLR4 signaling by acting at the level of TRAF6 ubiquitination, decreasing the activating 'Lys-63'-linked ubiquitination and leaving unchanged the degradative 'Lys-48'-linked ubiquitination. Inhibits the PI3K-AKT-mTOR pathway possibly by directly interacting with the posphatidylinositol 3-kinase regulatory subunit p85 (PIK3R1/PIK3R2) and disrupting the association between PIK3R1/PIK3R2 and the catalytic subunit p110 (PIK3CA/PIK3CB/PIK3CD) and reducing PIK3R1/PIK3R2 activation. Via its regulation of the PI3K-AKT-mTOR pathway, controls cell proliferation, predominantly in intestinal epithelial cells. May also affect NOD1- or NOD2-mediated NF-kappa-B activation. Might also affect the inflammatory response by preventing NLRP3 inflammasome formation, CASP1 cleavage and IL1B maturation. The sequence is that of Protein NLRC3 (Nlrc3) from Mus musculus (Mouse).